We begin with the raw amino-acid sequence, 149 residues long: Large ribosomal subunit protein bL9 (149 aa).

It belongs to the bacterial ribosomal protein bL9 family.

Binds to the 23S rRNA. The polypeptide is Large ribosomal subunit protein bL9 (Aliivibrio salmonicida (strain LFI1238) (Vibrio salmonicida (strain LFI1238))).